A 383-amino-acid chain; its full sequence is Succinyl-diaminopimelate desuccinylase (383 aa).

Position 79 (His79) interacts with Zn(2+). Asp81 is a catalytic residue. Asp110 is a Zn(2+) binding site. Glu141 (proton acceptor) is an active-site residue. The Zn(2+) site is built by Glu142, Glu170, and His355.

It belongs to the peptidase M20A family. DapE subfamily. In terms of assembly, homodimer. The cofactor is Zn(2+). Co(2+) serves as cofactor.

The catalysed reaction is N-succinyl-(2S,6S)-2,6-diaminopimelate + H2O = (2S,6S)-2,6-diaminopimelate + succinate. It participates in amino-acid biosynthesis; L-lysine biosynthesis via DAP pathway; LL-2,6-diaminopimelate from (S)-tetrahydrodipicolinate (succinylase route): step 3/3. Functionally, catalyzes the hydrolysis of N-succinyl-L,L-diaminopimelic acid (SDAP), forming succinate and LL-2,6-diaminopimelate (DAP), an intermediate involved in the bacterial biosynthesis of lysine and meso-diaminopimelic acid, an essential component of bacterial cell walls. The sequence is that of Succinyl-diaminopimelate desuccinylase from Helicobacter pylori (strain ATCC 700392 / 26695) (Campylobacter pylori).